We begin with the raw amino-acid sequence, 179 residues long: Large ribosomal subunit protein uL5 (179 aa).

It belongs to the universal ribosomal protein uL5 family. As to quaternary structure, part of the 50S ribosomal subunit; part of the 5S rRNA/L5/L18/L25 subcomplex. Contacts the 5S rRNA and the P site tRNA. Forms a bridge to the 30S subunit in the 70S ribosome.

This is one of the proteins that bind and probably mediate the attachment of the 5S RNA into the large ribosomal subunit, where it forms part of the central protuberance. In the 70S ribosome it contacts protein S13 of the 30S subunit (bridge B1b), connecting the 2 subunits; this bridge is implicated in subunit movement. Contacts the P site tRNA; the 5S rRNA and some of its associated proteins might help stabilize positioning of ribosome-bound tRNAs. The protein is Large ribosomal subunit protein uL5 of Bacillus velezensis (strain DSM 23117 / BGSC 10A6 / LMG 26770 / FZB42) (Bacillus amyloliquefaciens subsp. plantarum).